Here is a 92-residue protein sequence, read N- to C-terminus: C-C motif chemokine 4 (92 aa).

The first 23 residues, methionine 1–serine 23, serve as a signal peptide directing secretion. Cystine bridges form between cysteine 34–cysteine 58 and cysteine 35–cysteine 74.

Belongs to the intercrine beta (chemokine CC) family. As to quaternary structure, homodimer. Interacts with CCR5.

It is found in the secreted. Functionally, monokine with inflammatory and chemokinetic properties. The protein is C-C motif chemokine 4 (CCL4) of Bos taurus (Bovine).